We begin with the raw amino-acid sequence, 1420 residues long: MANLPIIGIYKVLYSYEPQEINPGEEIPENEREISIVEDEIVCLLEKGEDDWYLVKRNVNSNDDDEEIGIVPSNYITEAEPSTKMKALYDYTQQSVDEISFQADQTLDCYGDTDSDWILVGFNNNFGLAPRNYVEGMDASSAPASQEPSASGVNAPTVSAPNSMVSPPPSFQPPSAAAPATSLPSDYNPPPPPPPPPAVEDQAADANEPDDYYSSGRAVSPEIPPTYTPKQADPLPAPPPPPPPTLPPQSTNTSQLPMPSRNVNNLGSQVNIPPPPATPSQPPRPPTNASTRSTGTSSSMAHSYDSPPSPSSPSDAYGDPNQHLKLRTDSHDDSRAYDSSSSMGNPAYEKWEVREVVGKKKKRTGILAINNKSIVLTFTKTMDAAQVWPVTDLVNYSSERKHVFIEFNSDSGITSLHLHASSNTNADNIIRALGDVAGSARAAGLREIAAASGSPMPKLPSDSALHRLNAASDAAGVNGGRTGDYEMSTVYGDRSARAEDHKPKDSSAGQKMGTVLYDFIAEAADELTVKANMRVVIVNDTASSDWWKCSVDGKEGVVPSNFIKPDTEGDAKSPPSSSKSGQGSSLSRRASKHESKHKRDSKHEARPESKHESHRESKSAEKDKKDKKDKKEDSKRSRSHSVSKPDSSKLRTWTDRTGAFKVEAEFLGYSDDKIHLHKTNGVKISVPSAKMSYKDLDYVELMTGKKVYSRTERKKDTQKQSHDHGHSHSKSHDREKEKEKKKDREHRKHRETEEEDEGPPPQPARPESTRPALAPPSSSHSNDKYDVIQERPKISYDWFDFFLRCGVDFTVCNRYTHNFNNEHLDEACIPSLNPDTLRTLGLKEGDIIRVMNHVNELNGVSTKPASAITPETKSTVNQIMSGGEALAAPVAVPAPIPAPVAEPAPPAAPAKEVVEKAPSPPATRPKSTTPQKFDDDAWANKPVTEPPVRASSVTVEPARVTESMNKMNISEEAKKPEAPSRPRTAPIPEPEEQKKAPVEKKDAEKSVQAPIPAQPTGNITIQNAYFTAPQPMAADPFQSPLYVQPTGFQPPPSALPIQPTGYMQPIPVQATGYQPLMVQPTGLQPHMTGVMPQVTGVMPQMTGVVPQMTGVMPQMTGVQVQKTGAMPQQPVNYGYQVAGMQPQATGIISQPTGIRAQATGIMTQPTGLHTQATGMMQPTGMQPQATGIMPQATGMMQPTGMQPQVTGIMPQSMPMQPQMTGVQVQKTGMVAQPMLSQYTGYQQNYTPTAMPAADGYGMQPSMNDTQAYYNMNAQTPVNYGFAGGQDTSFGYEQQQMYSPMQQQQQQYYGTEMQPDMGYQQPMMSNYYDPMQMQQQTPYGYNQTGMEGYSEYGYAQPAGNMANPMSYDPVSNASLYMPSDYNQQTQPANYYDSSFGGAQGANEAGKKASIYQATPDNPFGF.

SH3 domains are found at residues Pro5–Pro81 and Ser82–Ala139. The segment at Asp138–Gly344 is disordered. A compositionally biased stretch (low complexity) spans Ala139–Ser151. Polar residues predominate over residues Gly152 to Val165. Low complexity predominate over residues Pro173–Ser185. Pro residues-rich tracts occupy residues Tyr187 to Ala198 and Leu235 to Pro247. Residues Ser250–Asn271 are compositionally biased toward polar residues. Residues Ile272–Pro286 show a composition bias toward pro residues. Residues Thr287–Ala301 are compositionally biased toward polar residues. Residues Ser309, Ser311, and Ser312 each carry the phosphoserine modification. Residues Leu326 to Ala336 show a composition bias toward basic and acidic residues. Ser454 carries the post-translational modification Phosphoserine. In terms of domain architecture, SH3 3 spans Ala508 to Glu568. Disordered stretches follow at residues Ser560–Thr657, Tyr708–Asp786, and Glu902–Thr1016. Residues Lys572–Ser587 are compositionally biased toward low complexity. 2 positions are modified to phosphoserine: Ser573 and Ser577. Basic residues predominate over residues Arg589–Asp600. Composition is skewed to basic and acidic residues over residues Ser601–Arg636 and Ser709–Lys742. Ser927 carries the phosphoserine modification. Thr929 is subject to Phosphothreonine. Composition is skewed to basic and acidic residues over residues Ile969–Ser980 and Glu991–Lys1005.

It belongs to the SLA1 family. As to quaternary structure, component of the PAN1 actin cytoskeleton-regulatory complex.

It is found in the cell membrane. The protein localises to the endosome membrane. Its subcellular location is the cytoplasm. It localises to the cytoskeleton. The protein resides in the actin patch. Component of the PAN1 actin cytoskeleton-regulatory complex required for the internalization of endosomes during actin-coupled endocytosis. The complex links the site of endocytosis to the cell membrane-associated actin cytoskeleton. Mediates uptake of external molecules and vacuolar degradation of plasma membrane proteins. Plays a role in the proper organization of the cell membrane-associated actin cytoskeleton and promotes its destabilization. The protein is Actin cytoskeleton-regulatory complex protein sla1 (sla1) of Schizosaccharomyces pombe (strain 972 / ATCC 24843) (Fission yeast).